The following is a 96-amino-acid chain: Co-chaperonin GroES (96 aa).

It belongs to the GroES chaperonin family. In terms of assembly, heptamer of 7 subunits arranged in a ring. Interacts with the chaperonin GroEL.

The protein localises to the cytoplasm. Together with the chaperonin GroEL, plays an essential role in assisting protein folding. The GroEL-GroES system forms a nano-cage that allows encapsulation of the non-native substrate proteins and provides a physical environment optimized to promote and accelerate protein folding. GroES binds to the apical surface of the GroEL ring, thereby capping the opening of the GroEL channel. The chain is Co-chaperonin GroES from Shewanella piezotolerans (strain WP3 / JCM 13877).